Reading from the N-terminus, the 94-residue chain is Pyrimidine/purine nucleoside phosphorylase (94 aa).

Belongs to the nucleoside phosphorylase PpnP family.

The catalysed reaction is a purine D-ribonucleoside + phosphate = a purine nucleobase + alpha-D-ribose 1-phosphate. It catalyses the reaction adenosine + phosphate = alpha-D-ribose 1-phosphate + adenine. The enzyme catalyses cytidine + phosphate = cytosine + alpha-D-ribose 1-phosphate. It carries out the reaction guanosine + phosphate = alpha-D-ribose 1-phosphate + guanine. The catalysed reaction is inosine + phosphate = alpha-D-ribose 1-phosphate + hypoxanthine. It catalyses the reaction thymidine + phosphate = 2-deoxy-alpha-D-ribose 1-phosphate + thymine. The enzyme catalyses uridine + phosphate = alpha-D-ribose 1-phosphate + uracil. It carries out the reaction xanthosine + phosphate = alpha-D-ribose 1-phosphate + xanthine. In terms of biological role, catalyzes the phosphorolysis of diverse nucleosides, yielding D-ribose 1-phosphate and the respective free bases. Can use uridine, adenosine, guanosine, cytidine, thymidine, inosine and xanthosine as substrates. Also catalyzes the reverse reactions. The sequence is that of Pyrimidine/purine nucleoside phosphorylase from Citrobacter koseri (strain ATCC BAA-895 / CDC 4225-83 / SGSC4696).